Consider the following 349-residue polypeptide: Leukotriene B4 receptor 1 (349 aa).

Over 1-19 (MNTTSPAAPSSSGVSFISL) the chain is Extracellular. Residue Asn-2 is glycosylated (N-linked (GlcNAc...) asparagine). Residues 20-42 (LVIIVLSVALAVGLPGNSFVVWS) traverse the membrane as a helical segment. At 43-54 (ILAKLRKRSVTA) the chain is on the cytoplasmic side. A helical membrane pass occupies residues 55–75 (LMVLHLALADLAVLLTAPFFL). The Extracellular segment spans residues 76 to 91 (YSVAQGTWTFGLSSCR). A helical membrane pass occupies residues 92 to 113 (LFHYVCGVSMYASVLLIMTMSL). Topologically, residues 114–138 (DRSLAVALPFVSQKLRTKAVAWRVL) are cytoplasmic. The chain crosses the membrane as a helical span at residues 139-159 (AGIWVMSVLLATPVLLYRTVH). Over 160–179 (LGLNNRSLTCFLKYPSERHR) the chain is Extracellular. Asn-164 is a glycosylation site (N-linked (GlcNAc...) asparagine). A helical transmembrane segment spans residues 180 to 200 (AFHLFFEVITGFLLPFLVVVA). At 201–222 (SYCDIGRRLRARRFRRSRRTGR) the chain is on the cytoplasmic side. Residues 223 to 243 (LVALIILAFAAFWLPYHVVNL) form a helical membrane-spanning segment. The Extracellular segment spans residues 244–269 (AEGFRAAAGKALGSGPVGRRLLLARH). Residues 270–290 (VLITLAFLSSSVNPLLYACAG) form a helical membrane-spanning segment. At 291-349 (GGLLRSAGVGFIAKLLEGTGSETSSSRRKGTLAQTLRGTPASPEPDPAESLTASTNPLE) the chain is on the cytoplasmic side. A disordered region spans residues 311–349 (SETSSSRRKGTLAQTLRGTPASPEPDPAESLTASTNPLE).

It belongs to the G-protein coupled receptor 1 family. Post-translationally, phosphorylated by GRK6 upon leukotriene B4 binding; which promotes desensitization.

Its subcellular location is the cell membrane. Functionally, receptor for extracellular ATP &gt; UTP and ADP. The activity of this receptor is mediated by G proteins which activate a phosphatidylinositol-calcium second messenger system. May be the cardiac P2Y receptor involved in the regulation of cardiac muscle contraction through modulation of L-type calcium currents. Is a receptor for leukotriene B4, a potent chemoattractant involved in inflammation and immune response. The polypeptide is Leukotriene B4 receptor 1 (LTB4R) (Bos taurus (Bovine)).